The following is a 513-amino-acid chain: ATP synthase subunit alpha (513 aa).

169–176 (GDRQTGKT) is a binding site for ATP.

Belongs to the ATPase alpha/beta chains family. In terms of assembly, F-type ATPases have 2 components, CF(1) - the catalytic core - and CF(0) - the membrane proton channel. CF(1) has five subunits: alpha(3), beta(3), gamma(1), delta(1), epsilon(1). CF(0) has three main subunits: a(1), b(2) and c(9-12). The alpha and beta chains form an alternating ring which encloses part of the gamma chain. CF(1) is attached to CF(0) by a central stalk formed by the gamma and epsilon chains, while a peripheral stalk is formed by the delta and b chains.

Its subcellular location is the cell inner membrane. It catalyses the reaction ATP + H2O + 4 H(+)(in) = ADP + phosphate + 5 H(+)(out). Produces ATP from ADP in the presence of a proton gradient across the membrane. The alpha chain is a regulatory subunit. The chain is ATP synthase subunit alpha from Shigella boydii serotype 18 (strain CDC 3083-94 / BS512).